The following is an 89-amino-acid chain: Small ribosomal subunit protein uS15 (89 aa).

Belongs to the universal ribosomal protein uS15 family. Part of the 30S ribosomal subunit. Forms a bridge to the 50S subunit in the 70S ribosome, contacting the 23S rRNA.

In terms of biological role, one of the primary rRNA binding proteins, it binds directly to 16S rRNA where it helps nucleate assembly of the platform of the 30S subunit by binding and bridging several RNA helices of the 16S rRNA. Forms an intersubunit bridge (bridge B4) with the 23S rRNA of the 50S subunit in the ribosome. The protein is Small ribosomal subunit protein uS15 of Mycobacterium sp. (strain JLS).